Reading from the N-terminus, the 416-residue chain is Probable glucan 1,3-beta-glucosidase A (416 aa).

The N-terminal stretch at M1–A22 is a signal peptide. Residue E211 is the Proton donor of the active site. Intrachain disulfides connect C291/C415 and C316/C342. E308 serves as the catalytic Nucleophile. N344 is a glycosylation site (N-linked (GlcNAc...) asparagine).

The protein belongs to the glycosyl hydrolase 5 (cellulase A) family. In terms of assembly, monomer. Mn(2+) serves as cofactor.

It localises to the secreted. The catalysed reaction is Successive hydrolysis of beta-D-glucose units from the non-reducing ends of (1-&gt;3)-beta-D-glucans, releasing alpha-glucose.. Its function is as follows. Beta-glucanases participate in the metabolism of beta-glucan, the main structural component of the cell wall. It could also function biosynthetically as a transglycosylase. In Aspergillus fumigatus (strain ATCC MYA-4609 / CBS 101355 / FGSC A1100 / Af293) (Neosartorya fumigata), this protein is Probable glucan 1,3-beta-glucosidase A (exgA).